We begin with the raw amino-acid sequence, 63 residues long: Large ribosomal subunit protein uL30 (63 aa).

Belongs to the universal ribosomal protein uL30 family. In terms of assembly, part of the 50S ribosomal subunit.

This Rhodospirillum rubrum (strain ATCC 11170 / ATH 1.1.1 / DSM 467 / LMG 4362 / NCIMB 8255 / S1) protein is Large ribosomal subunit protein uL30.